The primary structure comprises 128 residues: MRFAIVVTGPAYGTQQASSAFQFAQALIAEGHELSSVFFYREGVYNANQLTSPASDEFDLVRGWQQLNAQHGVALNICVAAALRRGVVDETEAGRLGLASSNLQPGFTLSGLGALAEASLTCDRVVQF.

C78 serves as the catalytic Cysteine persulfide intermediate.

It belongs to the DsrE/TusD family. Heterohexamer, formed by a dimer of trimers. The hexameric TusBCD complex contains 2 copies each of TusB, TusC and TusD. The TusBCD complex interacts with TusE.

The protein localises to the cytoplasm. Part of a sulfur-relay system required for 2-thiolation of 5-methylaminomethyl-2-thiouridine (mnm(5)s(2)U) at tRNA wobble positions. Accepts sulfur from TusA and transfers it in turn to TusE. The sequence is that of Sulfurtransferase TusD from Escherichia coli O127:H6 (strain E2348/69 / EPEC).